We begin with the raw amino-acid sequence, 429 residues long: MIDPNLLRNNLAEVAEKLKVKRNFMLDTEKLTALEDQRKNLQVTTENLQAERNARSKAIGAAKVRGEDIAPLLAEMDDMGNQLTEAKAQLDAVLAEINQIALSIPNLPADEVPLGKDDTENKEILRWGTPHTFDFEVKDHITLGEEANGLDFAAGAKLAGARFAVMKGQIAKMHRALAQFMLDLHTEQHGYLETYVPYLVNHATLYGTGQLPKFGEDLFHTLALEGEQPYALIPTAEVPVTNLVRDVIIDEAELPIKMTAHTPCFRSEAGSYGRDTRGLIRMHQFDKVEMVQIVDPDKSMEALEELTGHAEKVLQLLNLPYRKVLLCTGDMGFGSCKTYDLEVWLPAQNTYREISSCSNMWDFQARRMQARCKAKGDKKTRLVHTLNGSGLAVGRTLVAVLENYQNADGSITVPEELRPYMGGLDVIGK.

Residue 235–237 coordinates L-serine; that stretch reads TAE. 266 to 268 contributes to the ATP binding site; that stretch reads RSE. Residue Glu-289 participates in L-serine binding. 353–356 serves as a coordination point for ATP; the sequence is EISS. Ser-389 lines the L-serine pocket.

The protein belongs to the class-II aminoacyl-tRNA synthetase family. Type-1 seryl-tRNA synthetase subfamily. Homodimer. The tRNA molecule binds across the dimer.

It is found in the cytoplasm. The enzyme catalyses tRNA(Ser) + L-serine + ATP = L-seryl-tRNA(Ser) + AMP + diphosphate + H(+). It catalyses the reaction tRNA(Sec) + L-serine + ATP = L-seryl-tRNA(Sec) + AMP + diphosphate + H(+). The protein operates within aminoacyl-tRNA biosynthesis; selenocysteinyl-tRNA(Sec) biosynthesis; L-seryl-tRNA(Sec) from L-serine and tRNA(Sec): step 1/1. Functionally, catalyzes the attachment of serine to tRNA(Ser). Is also able to aminoacylate tRNA(Sec) with serine, to form the misacylated tRNA L-seryl-tRNA(Sec), which will be further converted into selenocysteinyl-tRNA(Sec). This is Serine--tRNA ligase from Haemophilus influenzae (strain 86-028NP).